The sequence spans 117 residues: Non-specific lipid-transfer protein Lac s 1 (117 aa).

Positions 1-25 are cleaved as a signal peptide; that stretch reads MARMAMMILCVVLTCMVVATPYTEA. 4 cysteine pairs are disulfide-bonded: Cys-29–Cys-76, Cys-39–Cys-53, Cys-54–Cys-99, and Cys-74–Cys-113.

This sequence belongs to the plant LTP family.

Plant non-specific lipid-transfer proteins transfer phospholipids as well as galactolipids across membranes. May play a role in wax or cutin deposition in the cell walls of expanding epidermal cells and certain secretory tissues. In Lactuca sativa (Garden lettuce), this protein is Non-specific lipid-transfer protein Lac s 1.